A 273-amino-acid polypeptide reads, in one-letter code: NADPH-dependent 7-cyano-7-deazaguanine reductase (273 aa).

Substrate is bound at residue 81 to 83; sequence VES. Residue 83–84 coordinates NADPH; sequence SK. C179 functions as the Thioimide intermediate in the catalytic mechanism. D186 serves as the catalytic Proton donor. Substrate is bound at residue 218–219; that stretch reads AE. 247 to 248 serves as a coordination point for NADPH; it reads RG.

This sequence belongs to the GTP cyclohydrolase I family. QueF type 2 subfamily. Homodimer.

The protein resides in the cytoplasm. The catalysed reaction is 7-aminomethyl-7-carbaguanine + 2 NADP(+) = 7-cyano-7-deazaguanine + 2 NADPH + 3 H(+). Its pathway is tRNA modification; tRNA-queuosine biosynthesis. Its function is as follows. Catalyzes the NADPH-dependent reduction of 7-cyano-7-deazaguanine (preQ0) to 7-aminomethyl-7-deazaguanine (preQ1). In Rickettsia massiliae (strain Mtu5), this protein is NADPH-dependent 7-cyano-7-deazaguanine reductase.